A 280-amino-acid chain; its full sequence is UPF0273 protein SSO1861 (280 aa).

A KaiC domain is found at 2–246; it reads KRVKTYIPGL…YLKISNWSVS (245 aa). Residue 29–36 participates in ATP binding; sequence GGPGTGKS.

It belongs to the UPF0273 family.

This is UPF0273 protein SSO1861 from Saccharolobus solfataricus (strain ATCC 35092 / DSM 1617 / JCM 11322 / P2) (Sulfolobus solfataricus).